The chain runs to 314 residues: Olfactory receptor 5P81 (314 aa).

Topologically, residues 1-28 (MAFLEDGNHTVVTEFILLGLTDDPVLRV) are extracellular. Asn-8 carries N-linked (GlcNAc...) asparagine glycosylation. Residues 29 to 49 (ILFIIILCIYLVTVSGNLSTI) traverse the membrane as a helical segment. The Cytoplasmic portion of the chain corresponds to 50 to 57 (LLIRVSSQ). A helical membrane pass occupies residues 58–78 (LHHPMYFFLSHLASIDIAISS). At 79–102 (SVTPNMVVNFLVERSSISYIGCGI) the chain is on the extracellular side. Cysteines 100 and 192 form a disulfide. Residues 103–123 (QLGSAVFFGAIECFLLAVMAY) form a helical membrane-spanning segment. Residues 124 to 136 (DRFVAICNPLLYS) lie on the Cytoplasmic side of the membrane. The helical transmembrane segment at 137-157 (TKMSKQVCIQLLVGSYIGGFI) threads the bilayer. The Extracellular portion of the chain corresponds to 158-199 (HASFFTLSFVSFLFCGPNRINHFFCDFTPLVELSCSDNSVLI). Residues 200–220 (ILDSFSTGTIIVITVFVIAIS) form a helical membrane-spanning segment. Topologically, residues 221–240 (YTCILITILKMHSTEGRHKA) are cytoplasmic. Residues 241-261 (FSTCTSHLTVVTLLYGTVTFI) form a helical membrane-spanning segment. Residues 262–274 (YVMPKSSYSTDQN) lie on the Extracellular side of the membrane. A helical transmembrane segment spans residues 275-295 (KVISVFYMVVIPMLNPIIYSL). Residues 296–314 (RNNEIKGALKKQLGEKNIF) are Cytoplasmic-facing.

This sequence belongs to the G-protein coupled receptor 1 family.

The protein localises to the cell membrane. Its function is as follows. Potential odorant receptor. The polypeptide is Olfactory receptor 5P81 (Mus musculus (Mouse)).